The chain runs to 404 residues: D-galactonate dehydratase family member PC1_0802 (404 aa).

Substrate-binding residues include asparagine 37 and histidine 122. The Proton donor/acceptor role is filled by tyrosine 159. Aspartate 212 serves as a coordination point for Mg(2+). Histidine 214 serves as the catalytic Proton donor/acceptor. Mg(2+)-binding residues include glutamate 238 and glutamate 264. The substrate site is built by glutamate 264, arginine 285, histidine 314, aspartate 318, and glutamate 341.

It belongs to the mandelate racemase/muconate lactonizing enzyme family. GalD subfamily. Requires Mg(2+) as cofactor.

It carries out the reaction D-mannonate = 2-dehydro-3-deoxy-D-gluconate + H2O. Its function is as follows. Has low D-mannonate dehydratase activity (in vitro), suggesting that this is not a physiological substrate and that it has no significant role in D-mannonate degradation in vivo. Has no detectable activity with a panel of 70 other acid sugars (in vitro). This chain is D-galactonate dehydratase family member PC1_0802, found in Pectobacterium carotovorum subsp. carotovorum (strain PC1).